A 211-amino-acid chain; its full sequence is Adenylyl-sulfate kinase (211 aa).

Residue 32-39 coordinates ATP; the sequence is GLSASGKS. Serine 107 acts as the Phosphoserine intermediate in catalysis.

The protein belongs to the APS kinase family. As to quaternary structure, homodimer.

It catalyses the reaction adenosine 5'-phosphosulfate + ATP = 3'-phosphoadenylyl sulfate + ADP + H(+). Its pathway is sulfur metabolism; hydrogen sulfide biosynthesis; sulfite from sulfate: step 2/3. Functionally, catalyzes the synthesis of activated sulfate. This chain is Adenylyl-sulfate kinase, found in Penicillium chrysogenum (Penicillium notatum).